We begin with the raw amino-acid sequence, 197 residues long: MTQGPNYRIKFRRRREGKTDYYTRYTYVINNAIRFVPRLTNKYVIVSVSKFDQKGDIMIAYAHSIELVKKYGWKGDTNNTPAAYLTGYLAGLRAVKSGVKAAVSDIGLFVPVKGGRIFAVIKGAIDAGLKVPVGDLGKLKDRVNGSHISAYAQKLKNENQELYNKLFSSYIQRGLDPVLLPQHFEEVLNKIKENGGK.

It belongs to the universal ribosomal protein uL18 family. As to quaternary structure, part of the 50S ribosomal subunit. Contacts the 5S and 23S rRNAs.

Functionally, this is one of the proteins that bind and probably mediate the attachment of the 5S RNA into the large ribosomal subunit, where it forms part of the central protuberance. This chain is Large ribosomal subunit protein uL18, found in Sulfolobus acidocaldarius (strain ATCC 33909 / DSM 639 / JCM 8929 / NBRC 15157 / NCIMB 11770).